The chain runs to 655 residues: uncharacterized protein (655 aa).

A helical membrane pass occupies residues 5–25 (IIIIIFIVINFINIIISSITF). Disordered regions lie at residues 337–363 (NSDY…NNNN) and 484–525 (DKIG…SDNS). Residues 515-524 (DNNSIGSSDN) show a composition bias toward low complexity. The chain crosses the membrane as a helical span at residues 588 to 608 (ILAVTISAIGIICVALLLTVV).

It localises to the membrane. This is an uncharacterized protein from Dictyostelium discoideum (Social amoeba).